A 197-amino-acid chain; its full sequence is Probable nicotinate-nucleotide adenylyltransferase (197 aa).

This sequence belongs to the NadD family.

The enzyme catalyses nicotinate beta-D-ribonucleotide + ATP + H(+) = deamido-NAD(+) + diphosphate. Its pathway is cofactor biosynthesis; NAD(+) biosynthesis; deamido-NAD(+) from nicotinate D-ribonucleotide: step 1/1. Catalyzes the reversible adenylation of nicotinate mononucleotide (NaMN) to nicotinic acid adenine dinucleotide (NaAD). The protein is Probable nicotinate-nucleotide adenylyltransferase of Chlorobium phaeobacteroides (strain DSM 266 / SMG 266 / 2430).